Consider the following 165-residue polypeptide: Large ribosomal subunit protein uL11 (165 aa).

A Phosphoserine modification is found at Ser-38. Residue Lys-40 forms a Glycyl lysine isopeptide (Lys-Gly) (interchain with G-Cter in SUMO2) linkage. A Glycyl lysine isopeptide (Lys-Gly) (interchain with G-Cter in ubiquitin) cross-link involves residue Lys-48. N6-acetyllysine is present on Lys-54. Residue Lys-83 forms a Glycyl lysine isopeptide (Lys-Gly) (interchain with G-Cter in ubiquitin) linkage. The residue at position 165 (Ser-165) is a Phosphoserine.

Belongs to the universal ribosomal protein uL11 family. As to quaternary structure, component of the large ribosomal subunit. Mature ribosomes consist of a small (40S) and a large (60S) subunit. The 40S subunit contains about 33 different proteins and 1 molecule of RNA (18S). The 60S subunit contains about 49 different proteins and 3 molecules of RNA (28S, 5.8S and 5S). Ubiquitinated at Lys-48 and Lys-83 by RNF14 and RNF25 in response to ribosome collisions (ribosome stalling).

The protein resides in the cytoplasm. Component of the large ribosomal subunit. The ribosome is a large ribonucleoprotein complex responsible for the synthesis of proteins in the cell. Binds directly to 26S ribosomal RNA. This Bos taurus (Bovine) protein is Large ribosomal subunit protein uL11 (RPL12).